The sequence spans 622 residues: Probable E3 ubiquitin-protein ligase DTX2 (622 aa).

WWE domains follow at residues 8–97 (SLVQ…AVRR) and 98–174 (HLFP…SVRR). 3 positions are modified to asymmetric dimethylarginine: arginine 213, arginine 215, and arginine 233. Position 249 is an N6-acetyllysine (lysine 249). Disordered stretches follow at residues 249-324 (KPSL…VPMQ) and 355-393 (APQP…EPEP). At arginine 256 the chain carries Omega-N-methylarginine. A compositionally biased stretch (polar residues) spans 274 to 285 (LGSQPLYRSSLS). The segment covering 299–322 (SGAVSASLPSGPSSSPGSVPATVP) has biased composition (low complexity). A Phosphoserine modification is found at serine 360. Basic residues predominate over residues 372–381 (GSVKRLRKMS). The segment at 412–473 (CIICMEKLST…DGSLQCPSCK (62 aa)) adopts an RING-type zinc-finger fold.

Belongs to the Deltex family. As to quaternary structure, homodimer. May form a heterodimer with other members of the Deltex family. Interacts with NOTCH1.

Its subcellular location is the cytoplasm. It localises to the nucleus. It catalyses the reaction S-ubiquitinyl-[E2 ubiquitin-conjugating enzyme]-L-cysteine + [acceptor protein]-L-lysine = [E2 ubiquitin-conjugating enzyme]-L-cysteine + N(6)-ubiquitinyl-[acceptor protein]-L-lysine.. The protein operates within protein modification; protein ubiquitination. Regulator of Notch signaling, a signaling pathway involved in cell-cell communications that regulates a broad spectrum of cell-fate determinations. Probably acts both as a positive and negative regulator of Notch, depending on the developmental and cell context. Mediates the antineural activity of Notch, possibly by inhibiting the transcriptional activation mediated by MATCH1. Functions as a ubiquitin ligase protein in vitro, suggesting that it may regulate the Notch pathway via some ubiquitin ligase activity. This is Probable E3 ubiquitin-protein ligase DTX2 (DTX2) from Homo sapiens (Human).